The following is a 207-amino-acid chain: Ribosomal RNA small subunit methyltransferase G (207 aa).

S-adenosyl-L-methionine-binding positions include Gly-73, Leu-78, 124–125, and Arg-139; that span reads VE.

This sequence belongs to the methyltransferase superfamily. RNA methyltransferase RsmG family.

The protein localises to the cytoplasm. The enzyme catalyses guanosine(527) in 16S rRNA + S-adenosyl-L-methionine = N(7)-methylguanosine(527) in 16S rRNA + S-adenosyl-L-homocysteine. Its function is as follows. Specifically methylates the N7 position of guanine in position 527 of 16S rRNA. This Salmonella schwarzengrund (strain CVM19633) protein is Ribosomal RNA small subunit methyltransferase G.